The sequence spans 155 residues: D-aminoacyl-tRNA deacylase (155 aa).

The short motif at 137–138 (GP) is the Gly-cisPro motif, important for rejection of L-amino acids element.

It belongs to the DTD family. Homodimer.

Its subcellular location is the cytoplasm. It carries out the reaction glycyl-tRNA(Ala) + H2O = tRNA(Ala) + glycine + H(+). The enzyme catalyses a D-aminoacyl-tRNA + H2O = a tRNA + a D-alpha-amino acid + H(+). Functionally, an aminoacyl-tRNA editing enzyme that deacylates mischarged D-aminoacyl-tRNAs. Also deacylates mischarged glycyl-tRNA(Ala), protecting cells against glycine mischarging by AlaRS. Acts via tRNA-based rather than protein-based catalysis; rejects L-amino acids rather than detecting D-amino acids in the active site. By recycling D-aminoacyl-tRNA to D-amino acids and free tRNA molecules, this enzyme counteracts the toxicity associated with the formation of D-aminoacyl-tRNA entities in vivo and helps enforce protein L-homochirality. The chain is D-aminoacyl-tRNA deacylase from Geotalea uraniireducens (strain Rf4) (Geobacter uraniireducens).